We begin with the raw amino-acid sequence, 346 residues long: Sensor protein kinase GraS (346 aa).

A run of 2 helical transmembrane segments spans residues 18–38 (IFWI…DYDF) and 43–63 (LFYI…LTFF). In terms of domain architecture, Histidine kinase spans 126–332 (EFVHDIKTPV…TVKLIFPLQN (207 aa)).

Interacts with GraX.

Its subcellular location is the cell membrane. The enzyme catalyses ATP + protein L-histidine = ADP + protein N-phospho-L-histidine.. Its function is as follows. Member of the two-component regulatory system GraR/GraS involved in resistance against cationic antimicrobial peptides (CAMPs). Functions as a sensor protein kinase which phosphorylates GraR through the auxiliary protein GraX. In turn, GraR up-regulates many genes such as adhesins, exoproteins, transporters, toxins, and proteins involved in cell wall synthesis. Down-regulates the expression of many genes involved in RNA and amino acid synthesis or glycolysis. The polypeptide is Sensor protein kinase GraS (graS) (Staphylococcus aureus (strain MRSA252)).